The primary structure comprises 64 residues: Large ribosomal subunit protein bL32 (64 aa).

Belongs to the bacterial ribosomal protein bL32 family.

In Mycoplasma mobile (strain ATCC 43663 / 163K / NCTC 11711) (Mesomycoplasma mobile), this protein is Large ribosomal subunit protein bL32.